A 586-amino-acid polypeptide reads, in one-letter code: MGQDKKNLTAAAAAAYVDDSTTWESFGLDARLLQAIDQLGFENPTLIQSSAIPLAIEEKRDIIAKASTGSGKTAAYSIPIIQNLLQDESTEREIKSIILVPTRELSNQVSQFLEKLLIFCNSKIRLINISSNLSDQVINSLLINKPEIIVSTPAKLIQILEKNVNSNLINLSTVKNLTIDEVDLVLSYGYLEDLQKLESYLPIKKNLQTFLMSATINDDLNDIKSKFCSRPAILKLNDEDSNQNNLVQYYAKTTEFDKFLLTYVIFKLNLIKGKTLVFVNNIDRGYRLKLFLEQFGVRCCILNSELPINSRLNIVEQYNKNVYNLLIATDETNDFTIQEDEKDEGEEIEENKNEENDGKTSKNTKKPNQKKDKEYGVSRGVDFRNVACVLNFDLPTSSKSYIHRVGRTARAGKSGMALSFVLPLNEFGKHKTASLSTAKKDEKVLRRIVRQQSNNGFEIKPYQFDMKQVEGFRYRAEDAFRAVTQSAVREARIKELKNELVNSDKLKRFFEENPQDLASLRHDKELHPTRVQTHLKRVPEYLLPESARADHKKIGFVPFHKNKVHKNRKRKPSGRKPDPLKSFRPK.

Positions 21-49 match the Q motif motif; it reads TTWESFGLDARLLQAIDQLGFENPTLIQS. One can recognise a Helicase ATP-binding domain in the interval 53 to 234; it reads PLAIEEKRDI…SKFCSRPAIL (182 aa). Residue 66–73 coordinates ATP; that stretch reads ASTGSGKT. The DEAD box signature appears at 180-183; it reads DEVD. One can recognise a Helicase C-terminal domain in the interval 245 to 467; it reads NLVQYYAKTT…EIKPYQFDMK (223 aa). The span at 339-349 shows a compositional bias: acidic residues; it reads EDEKDEGEEIE. Disordered regions lie at residues 339–375 and 560–586; these read EDEKDEGEEIEENKNEENDGKTSKNTKKPNQKKDKEY and HKNKVHKNRKRKPSGRKPDPLKSFRPK. Over residues 350–360 the composition is skewed to basic and acidic residues; sequence ENKNEENDGKT. Residues 560–574 show a composition bias toward basic residues; that stretch reads HKNKVHKNRKRKPSG. Residues 575–586 are compositionally biased toward basic and acidic residues; it reads RKPDPLKSFRPK.

It belongs to the DEAD box helicase family. DDX56/DBP9 subfamily.

The protein localises to the nucleus. It is found in the nucleolus. It carries out the reaction ATP + H2O = ADP + phosphate + H(+). ATP-binding RNA helicase involved in the biogenesis of 60S ribosomal subunits and is required for the normal formation of 25S and 5.8S rRNAs. The chain is ATP-dependent RNA helicase DBP9 (DBP9) from Debaryomyces hansenii (strain ATCC 36239 / CBS 767 / BCRC 21394 / JCM 1990 / NBRC 0083 / IGC 2968) (Yeast).